The following is a 313-amino-acid chain: MNGVWIEVRVITSCEAIEPISGIFYGLNSQGVAVEDPNDLLTRDQGPLTWDFADINVLEHKGEFAVVKAYFSGDDDLEKIVSITKEKVKEIQEMGIDIGKGIVECDKIKEEDWANNWKKYYKPSNITDRIVVKPMWEEYSPKNEELVIELDPGMAFGTGTHETTRMCVKALEKYVEHDSTVFDVGCGSGILAIAAAKLGAKLALGVDLDPVAVESAKENVGLNDLDNIEILEGNLLDVIDGKADIVVANIIAEIICILTDDVSKALNKGGLFITSGIIHERVDMVTSKLDECGFEVMEVNKDGEWNCIVAKLK.

S-adenosyl-L-methionine is bound by residues T164, G185, D207, and N249.

This sequence belongs to the methyltransferase superfamily. PrmA family.

The protein resides in the cytoplasm. The enzyme catalyses L-lysyl-[protein] + 3 S-adenosyl-L-methionine = N(6),N(6),N(6)-trimethyl-L-lysyl-[protein] + 3 S-adenosyl-L-homocysteine + 3 H(+). Methylates ribosomal protein L11. In Clostridium botulinum (strain Eklund 17B / Type B), this protein is Ribosomal protein L11 methyltransferase.